The sequence spans 371 residues: tRNA-specific 2-thiouridylase MnmA (371 aa).

Residues 12 to 19 and Met-38 contribute to the ATP site; that span reads GMSGGVDS. The interval 98-100 is interaction with target base in tRNA; sequence NPD. The Nucleophile role is filled by Cys-103. The cysteines at positions 103 and 200 are disulfide-linked. Gly-127 is an ATP binding site. Positions 150 to 152 are interaction with tRNA; it reads KDQ. Catalysis depends on Cys-200, which acts as the Cysteine persulfide intermediate. Positions 308 to 309 are interaction with tRNA; the sequence is RY.

This sequence belongs to the MnmA/TRMU family.

The protein resides in the cytoplasm. The catalysed reaction is S-sulfanyl-L-cysteinyl-[protein] + uridine(34) in tRNA + AH2 + ATP = 2-thiouridine(34) in tRNA + L-cysteinyl-[protein] + A + AMP + diphosphate + H(+). Its function is as follows. Catalyzes the 2-thiolation of uridine at the wobble position (U34) of tRNA, leading to the formation of s(2)U34. The sequence is that of tRNA-specific 2-thiouridylase MnmA from Oceanobacillus iheyensis (strain DSM 14371 / CIP 107618 / JCM 11309 / KCTC 3954 / HTE831).